We begin with the raw amino-acid sequence, 187 residues long: Ribosome-recycling factor (187 aa).

The protein belongs to the RRF family.

It localises to the cytoplasm. Its function is as follows. Responsible for the release of ribosomes from messenger RNA at the termination of protein biosynthesis. May increase the efficiency of translation by recycling ribosomes from one round of translation to another. This is Ribosome-recycling factor from Paracoccus denitrificans (strain Pd 1222).